Consider the following 364-residue polypeptide: Aminomethyltransferase (364 aa).

This sequence belongs to the GcvT family. As to quaternary structure, the glycine cleavage system is composed of four proteins: P, T, L and H.

The enzyme catalyses N(6)-[(R)-S(8)-aminomethyldihydrolipoyl]-L-lysyl-[protein] + (6S)-5,6,7,8-tetrahydrofolate = N(6)-[(R)-dihydrolipoyl]-L-lysyl-[protein] + (6R)-5,10-methylene-5,6,7,8-tetrahydrofolate + NH4(+). In terms of biological role, the glycine cleavage system catalyzes the degradation of glycine. The protein is Aminomethyltransferase of Shigella dysenteriae serotype 1 (strain Sd197).